A 345-amino-acid polypeptide reads, in one-letter code: Anthranilate phosphoribosyltransferase (345 aa).

Residues Gly-81, 84–85, Ser-89, 91–94, 109–117, and Ala-121 contribute to the 5-phospho-alpha-D-ribose 1-diphosphate site; these read GD, NVST, and KHGNRAATS. Gly-81 is a binding site for anthranilate. Ser-93 is a Mg(2+) binding site. Asn-112 lines the anthranilate pocket. Arg-167 serves as a coordination point for anthranilate. Positions 226 and 227 each coordinate Mg(2+).

This sequence belongs to the anthranilate phosphoribosyltransferase family. Homodimer. Mg(2+) serves as cofactor.

The catalysed reaction is N-(5-phospho-beta-D-ribosyl)anthranilate + diphosphate = 5-phospho-alpha-D-ribose 1-diphosphate + anthranilate. Its pathway is amino-acid biosynthesis; L-tryptophan biosynthesis; L-tryptophan from chorismate: step 2/5. Catalyzes the transfer of the phosphoribosyl group of 5-phosphorylribose-1-pyrophosphate (PRPP) to anthranilate to yield N-(5'-phosphoribosyl)-anthranilate (PRA). The polypeptide is Anthranilate phosphoribosyltransferase (Methylobacterium radiotolerans (strain ATCC 27329 / DSM 1819 / JCM 2831 / NBRC 15690 / NCIMB 10815 / 0-1)).